Consider the following 363-residue polypeptide: MHKDEDQRLLGPAPLPNDPDRSLRPQVLDDFIGQEAARANLKIFIEAAKTRQEALDHVLFVGPPGLGKTTLSQIMAKELGVNFRSTSGPVIAKAGDLAALLTNLEERDVLFIDEIHRLNPAIEEILYPAMEDYQLDLIIGEGPAARSVKIDLAKFTLVAATTRLGLLTTPLRDRFGIPIRLNFYTIEELEYIVQRNARLFAVKISDDGAHEIARRARGTPRIAGRLLRRVCDFALVKQAKQIDRKIADEALSRLEVDHLGLDPLDRRYLLLIAETFLGGPVGIETIAAALSEPRDAIEDIVEPYLLQQGFIQRTARGRILTEKAWSHLGLAAPASTSIQKRTQLSDAQDNVSLQTTLWDGEDD.

The tract at residues 1–23 (MHKDEDQRLLGPAPLPNDPDRSL) is disordered. The large ATPase domain (RuvB-L) stretch occupies residues 1–184 (MHKDEDQRLL…FGIPIRLNFY (184 aa)). ATP is bound by residues L23, R24, G65, K68, T69, T70, 131–133 (EDY), R174, Y184, and R221. Residue T69 coordinates Mg(2+). The interval 185–255 (TIEELEYIVQ…IADEALSRLE (71 aa)) is small ATPAse domain (RuvB-S). Residues 258–363 (HLGLDPLDRR…QTTLWDGEDD (106 aa)) form a head domain (RuvB-H) region. R294, R313, and R318 together coordinate DNA.

It belongs to the RuvB family. In terms of assembly, homohexamer. Forms an RuvA(8)-RuvB(12)-Holliday junction (HJ) complex. HJ DNA is sandwiched between 2 RuvA tetramers; dsDNA enters through RuvA and exits via RuvB. An RuvB hexamer assembles on each DNA strand where it exits the tetramer. Each RuvB hexamer is contacted by two RuvA subunits (via domain III) on 2 adjacent RuvB subunits; this complex drives branch migration. In the full resolvosome a probable DNA-RuvA(4)-RuvB(12)-RuvC(2) complex forms which resolves the HJ.

It is found in the cytoplasm. It carries out the reaction ATP + H2O = ADP + phosphate + H(+). Functionally, the RuvA-RuvB-RuvC complex processes Holliday junction (HJ) DNA during genetic recombination and DNA repair, while the RuvA-RuvB complex plays an important role in the rescue of blocked DNA replication forks via replication fork reversal (RFR). RuvA specifically binds to HJ cruciform DNA, conferring on it an open structure. The RuvB hexamer acts as an ATP-dependent pump, pulling dsDNA into and through the RuvAB complex. RuvB forms 2 homohexamers on either side of HJ DNA bound by 1 or 2 RuvA tetramers; 4 subunits per hexamer contact DNA at a time. Coordinated motions by a converter formed by DNA-disengaged RuvB subunits stimulates ATP hydrolysis and nucleotide exchange. Immobilization of the converter enables RuvB to convert the ATP-contained energy into a lever motion, pulling 2 nucleotides of DNA out of the RuvA tetramer per ATP hydrolyzed, thus driving DNA branch migration. The RuvB motors rotate together with the DNA substrate, which together with the progressing nucleotide cycle form the mechanistic basis for DNA recombination by continuous HJ branch migration. Branch migration allows RuvC to scan DNA until it finds its consensus sequence, where it cleaves and resolves cruciform DNA. This Bartonella tribocorum (strain CIP 105476 / IBS 506) protein is Holliday junction branch migration complex subunit RuvB.